We begin with the raw amino-acid sequence, 2381 residues long: Myb-like protein U (2381 aa).

Disordered stretches follow at residues 1-85, 148-167, 178-492, and 641-696; these read MKTK…TSNN, SSSG…GGIS, PTIP…NNNN, and NINN…GDEM. Composition is skewed to low complexity over residues 30 to 41 and 64 to 79; these read SKSSSKVSQSSS and TIPA…PTLT. 3 stretches are compositionally biased toward low complexity: residues 192 to 204, 225 to 261, and 291 to 315; these read NLSS…NILS, ENVN…SSSS, and SNKS…NNKK. Acidic residues predominate over residues 331-343; it reads SEYDSSDSSDMDL. Residues 363 to 405 are compositionally biased toward low complexity; sequence TTKPNNSNSNNNNNNNSINSTIPASNNINSANNSKTTNKNITS. Positions 421 to 430 are enriched in polar residues; the sequence is SETPILTSVK. Low complexity-rich tracts occupy residues 435 to 492 and 641 to 692; these read QQIP…NNNN and NINN…NNNN. A Myb-like domain is found at 856–899; sequence WHEEEKLLFRELFCAYGRDWQMVSTLMCGTKSPTQIKNFYYDVR. 10 disordered regions span residues 932 to 1024, 1068 to 1093, 1145 to 1207, 1295 to 1339, 1422 to 1474, 1597 to 1647, 1667 to 1849, 1961 to 1985, 2055 to 2106, and 2122 to 2280; these read KPEQ…ETPP, INQS…NINP, TSST…SNQE, STTT…PPID, PYYP…LSTP, PPAT…TTIV, PIVK…PPPV, TTVP…NGLA, TSTV…NGLT, and LSGI…NKND. Residues 936–953 are compositionally biased toward low complexity; that stretch reads NVNSNNNNNGGGNSLKDG. Positions 982–995 are enriched in basic residues; the sequence is VKKKSRTASKRSFR. The span at 1000 to 1013 shows a compositional bias: polar residues; sequence ANETNRTPKNQPKP. Low complexity-rich tracts occupy residues 1069 to 1092, 1145 to 1186, 1195 to 1205, and 1306 to 1325; these read NQSS…NNIN, TSST…TGSA, VNNNNNNNLSN, and TTTP…QLQQ. Residues 1326-1337 are compositionally biased toward pro residues; sequence LPPPPPPPPKPP. The segment covering 1427–1474 has biased composition (low complexity); sequence PSSTTTNSATSTPTSTPTSTPSTSASTLTPTSTPTSTPVPAPTSLSTP. Residues 1597–1606 show a composition bias toward pro residues; it reads PPATITPILP. Over residues 1618 to 1637 the composition is skewed to low complexity; that stretch reads SSSSSSSSSSSSSSSSSSSS. Polar residues-rich tracts occupy residues 1638–1647 and 1671–1701; these read TTKNNSTTIV and QESN…KTLL. 2 stretches are compositionally biased toward low complexity: residues 1702–1735 and 1743–1809; these read PSNS…NPSS and TSNK…TLKP. Residues 1829-1844 are compositionally biased toward polar residues; that stretch reads APTNSTNQNTIPNATT. 2 stretches are compositionally biased toward low complexity: residues 1961-1970 and 2065-2097; these read TTVPGTTTTT and NNMT…QQST. Polar residues predominate over residues 2129-2138; that stretch reads NTLSGKSPTP. The segment covering 2154–2209 has biased composition (low complexity); sequence PSLSSSSANPISITNNTTSLSQQSNTTNTMPSTVSLSSGSTSINSNSSNSKSLRSP. Basic and acidic residues predominate over residues 2210–2278; that stretch reads KSSDNDGKES…NNNDKFDSNK (69 aa).

The polypeptide is Myb-like protein U (mybU) (Dictyostelium discoideum (Social amoeba)).